Here is a 1172-residue protein sequence, read N- to C-terminus: NACHT, LRR and PYD domains-containing protein 1b allele 3 (1172 aa).

The segment at 1–22 (MEESPPKQKSNTKVAQHEGQQD) is disordered. The NACHT domain maps to 126-435 (QLVIIEGAAG…EFFAAISCIL (310 aa)). 132-139 (GAAGIGKS) provides a ligand contact to ATP. LRR repeat units follow at residues 627-647 (NLEG…QSLC) and 684-704 (SLTE…RMLC). The ZU5 stretch occupies residues 789 to 922 (FWGPTGPVAT…GYTVLKNPSF (134 aa)). In terms of domain architecture, FIIND spans 789–1072 (FWGPTGPVAT…LRPALPRIAQ (284 aa)). The tract at residues 923-1072 (SPMGDVLRII…LRPALPRIAQ (150 aa)) is UPA. One can recognise a CARD domain in the interval 1082 to 1165 (HFMDQHREQL…HLVMDLLEKS (84 aa)).

This sequence belongs to the NLRP family. In contrast to allele 1 and 2, not able to mediate autocatalytic cleavage. In terms of tissue distribution, expressed in macrophages.

The protein resides in the cytoplasm. It localises to the cytosol. In contrast to allele 1, does not undergo autocatalytic cleavage within the FIIND domain and its mode of activation remains unclear. In contrast to alleles 1 and 2, allele 3 is not activated by Val-boroPro (Talabostat, PT-100). Not activated by cleavage by B.anthracis lethal toxin (LT) endopeptidase. Not activated by metabolic inhibitors, such as 2-deoxy-D-glucose and sodium azide. Functionally, may act as the sensor component of the Nlrp1b inflammasome, which mediates inflammasome activation in response to various pathogen-associated signals, leading to subsequent pyroptosis. Inflammasomes are supramolecular complexes that assemble in the cytosol in response to pathogens and other damage-associated signals and play critical roles in innate immunity and inflammation. May act as a recognition receptor (PRR), which recognizes specific pathogens and other damage-associated signals and forms an inflammasome complex: the inflammasome directly recruits pro-caspase-1 (proCASP1) independently of PYCARD/ASC and promotes caspase-1 (CASP1) activation, which subsequently cleaves and activates inflammatory cytokines IL1B and IL18 and gasdermin-D (GSDMD), leading to pyroptosis. In the absence of GSDMD expression, the Nlrp1b inflammasome is able to recruit and activate CASP8, leading to activation of gasdermin-E (GSDME). Contrary to Nlrp1b allele 1, allele 3 is not activated by Bacillus anthracis lethal toxin. The absence of autocatalytic cleavage within the FIIND domain, which regulates activation in other alleles, suggests that allele 3 may be non-functional. This chain is NACHT, LRR and PYD domains-containing protein 1b allele 3, found in Mus musculus (Mouse).